The primary structure comprises 371 residues: Ferrochelatase (371 aa).

2 residues coordinate Fe cation: H218 and E299.

It belongs to the ferrochelatase family.

The protein resides in the cytoplasm. The enzyme catalyses heme b + 2 H(+) = protoporphyrin IX + Fe(2+). It participates in porphyrin-containing compound metabolism; protoheme biosynthesis; protoheme from protoporphyrin-IX: step 1/1. Its function is as follows. Catalyzes the ferrous insertion into protoporphyrin IX. The chain is Ferrochelatase from Ralstonia nicotianae (strain ATCC BAA-1114 / GMI1000) (Ralstonia solanacearum).